A 324-amino-acid chain; its full sequence is uncharacterized protein (324 aa).

Residues 1 to 11 are compositionally biased toward polar residues; sequence MNTNINVNGSN. 3 disordered regions span residues 1 to 77, 132 to 194, and 272 to 324; these read MNTN…YSYS, NNHY…NNNN, and DENI…DNDS. A compositionally biased stretch (low complexity) spans 21-64; sequence NENNNNNNGRNNNTNNNNNGRYNNNNNNNNNNNNNNYNLNMNST. Over residues 279 to 324 the composition is skewed to low complexity; sequence SNNNNNNNNNNNNSYNVNICRNNSNFNVNENNGGDNNNDNNNDNDS.

This is an uncharacterized protein from Dictyostelium discoideum (Social amoeba).